Reading from the N-terminus, the 98-residue chain is NADH-ubiquinone oxidoreductase chain 4L (98 aa).

3 helical membrane passes run 1 to 21 (MTHIMFTFSTAFMLGLSGLTF), 26 to 46 (LLSALLCLEGMMLSLFIALAM), and 59 to 79 (APLLLLALSACEAGLGLSLLV).

It belongs to the complex I subunit 4L family.

It is found in the mitochondrion membrane. The enzyme catalyses a ubiquinone + NADH + 5 H(+)(in) = a ubiquinol + NAD(+) + 4 H(+)(out). In terms of biological role, core subunit of the mitochondrial membrane respiratory chain NADH dehydrogenase (Complex I) which catalyzes electron transfer from NADH through the respiratory chain, using ubiquinone as an electron acceptor. Part of the enzyme membrane arm which is embedded in the lipid bilayer and involved in proton translocation. This Polypterus ornatipinnis (Ornate bichir) protein is NADH-ubiquinone oxidoreductase chain 4L (MT-ND4L).